The primary structure comprises 516 residues: Acyl-lipid (7-3)-desaturase, chloroplastic (516 aa).

The disordered stretch occupies residues 1–25 (MNATMQRSAVAGRTSGKVATTARAS). The N-terminal 47 residues, 1-47 (MNATMQRSAVAGRTSGKVATTARASSMARPRLPIAGRVARRSAVTVR), are a transit peptide targeting the chloroplast. The 66-residue stretch at 83-148 (WTVYRGVAYD…LADFPVDAVP (66 aa)) folds into the Cytochrome b5 heme-binding domain. The heme site is built by H100 and H123. The next 2 membrane-spanning stretches (helical) occupy residues 186–206 (GAAFAVLGYAAAMYALYTYDA) and 209–229 (LTGALLGLGGAWIGLTIQHCG). The short motif at 227–231 (HCGNH) is the Histidine box-1 element. The short motif at 262 to 267 (HQVSHH) is the Histidine box-2 element. The next 4 membrane-spanning stretches (helical) occupy residues 305–325 (MWALFPFLQLVFQIGDWQALL), 354–374 (FLLYGLPAFLHGPTAMLGGAA), 375–395 (GYLFTQSIVLAATFAVSHNVP), and 423–443 (VLTSANWGGVIGNFFTGGLNL). The short motif at 444-448 (QIEHH) is the Histidine box-3 element.

It belongs to the fatty acid desaturase type 1 family. The cofactor is Fe(2+).

It localises to the plastid. Its subcellular location is the chloroplast membrane. The catalysed reaction is a (7Z,10Z,13Z,16Z,19Z)-docosapentaenoyl-containing glycerolipid + 2 Fe(II)-[cytochrome b5] + O2 + 2 H(+) = a (4Z,7Z,10Z,13Z,16Z,19Z)-docosahexaenoyl-containing glycerolipid + 2 Fe(III)-[cytochrome b5] + 2 H2O. The enzyme catalyses a (7Z,10Z,13Z,16Z)-docosatetraenoyl-containing glycerolipid + 2 Fe(II)-[cytochrome b5] + O2 + 2 H(+) = a (4Z,7Z,10Z,13Z,16Z)-docosapentaenoyl-containing glycerolipid + 2 Fe(III)-[cytochrome b5] + 2 H2O. In terms of biological role, fatty acid desaturase that introduces a cis double bond at the 4-position in 16-carbon polyunsaturated fatty acids that contain a Delta(7) double bond, resulting in the production of 16 carbon fatty acid (7Z,10Z,13Z)-hexadeca-7,10,13-trienoate. In Chlamydomonas reinhardtii (Chlamydomonas smithii), this protein is Acyl-lipid (7-3)-desaturase, chloroplastic.